The sequence spans 86 residues: Neurotoxin 3FTx-RK (86 aa).

Positions 1–21 (MKTLLLTLVVVTIVCLELGYT) are cleaved as a signal peptide. 4 disulfide bridges follow: Cys24–Cys45, Cys38–Cys63, Cys67–Cys78, and Cys79–Cys84.

As to expression, expressed by the venom gland.

The protein localises to the secreted. The protein is Neurotoxin 3FTx-RK of Bungarus fasciatus (Banded krait).